The chain runs to 200 residues: Casparian strip membrane protein 2 (200 aa).

Over 1–37 (MMKSDSVAIDVPESSSVAKRKAPFMANIRDENGGYKK) the chain is Cytoplasmic. A helical transmembrane segment spans residues 38 to 58 (GLAIFDFILRLGAIAAALGAA). The Extracellular segment spans residues 59 to 88 (STMGTSDETLPFFTQFFQFNAGYDDFPTFQ). A helical membrane pass occupies residues 89–109 (FFVIAMAMVAGYLVLSLPFSI). The Cytoplasmic portion of the chain corresponds to 110 to 121 (VSICRPHAAGPR). The helical transmembrane segment at 122-142 (ILLFILDTVALTLNAAAGAAA) threads the bilayer. Over 143–175 (ADIVYLAHNGNQTTNWLAICLQFGDFCREVSGS) the chain is Extracellular. Asn-153 carries N-linked (GlcNAc...) asparagine glycosylation. The chain crosses the membrane as a helical span at residues 176–196 (VVASFASVVILMVLVVMSGLA). The Cytoplasmic portion of the chain corresponds to 197-200 (LRRY).

The protein belongs to the Casparian strip membrane proteins (CASP) family. In terms of assembly, homodimer and heterodimers.

The protein localises to the cell membrane. Functionally, regulates membrane-cell wall junctions and localized cell wall deposition. Required for establishment of the Casparian strip membrane domain (CSD) and the subsequent formation of Casparian strips, a cell wall modification of the root endodermis that determines an apoplastic barrier between the intraorganismal apoplasm and the extraorganismal apoplasm and prevents lateral diffusion. The polypeptide is Casparian strip membrane protein 2 (Ricinus communis (Castor bean)).